The primary structure comprises 319 residues: tRNA N6-adenosine threonylcarbamoyltransferase (319 aa).

The Fe cation site is built by His-110 and His-114. Residues Val-132–Gly-136, Asp-165, Gly-178, Asp-182, and Asn-271 contribute to the substrate site. Asp-300 serves as a coordination point for Fe cation.

This sequence belongs to the KAE1 / TsaD family. Requires Fe(2+) as cofactor.

The protein resides in the cytoplasm. It carries out the reaction L-threonylcarbamoyladenylate + adenosine(37) in tRNA = N(6)-L-threonylcarbamoyladenosine(37) in tRNA + AMP + H(+). In terms of biological role, required for the formation of a threonylcarbamoyl group on adenosine at position 37 (t(6)A37) in tRNAs that read codons beginning with adenine. Is involved in the transfer of the threonylcarbamoyl moiety of threonylcarbamoyl-AMP (TC-AMP) to the N6 group of A37, together with TsaE and TsaB. TsaD likely plays a direct catalytic role in this reaction. The polypeptide is tRNA N6-adenosine threonylcarbamoyltransferase (Mycoplasma capricolum subsp. capricolum (strain California kid / ATCC 27343 / NCTC 10154)).